Consider the following 397-residue polypeptide: Probable inactive purple acid phosphatase 28 (397 aa).

Positions 1–30 are cleaved as a signal peptide; the sequence is MNCSIGNWKHTVLYLTLIVSLLYFIESLIS. Residues Asn91 and Asn209 are each glycosylated (N-linked (GlcNAc...) asparagine). Residues His266 and His314 each coordinate Zn(2+). 314-316 lines the substrate pocket; that stretch reads HDH. His316 is a Fe cation binding site.

It belongs to the metallophosphoesterase superfamily. Purple acid phosphatase family. In terms of assembly, homodimer. The cofactor is Fe cation. Zn(2+) serves as cofactor. In terms of tissue distribution, expressed in roots, stems, leaves, flowers and siliques.

The protein localises to the secreted. This is Probable inactive purple acid phosphatase 28 (PAP28) from Arabidopsis thaliana (Mouse-ear cress).